The following is a 434-amino-acid chain: Homogentisate 1,2-dioxygenase (434 aa).

His-289 functions as the Proton acceptor in the catalytic mechanism. Fe cation contacts are provided by His-332 and Glu-338. Homogentisate-binding residues include Tyr-347 and His-368. Residue His-368 coordinates Fe cation.

This sequence belongs to the homogentisate dioxygenase family. In terms of assembly, hexamer; dimer of trimers. Fe cation is required as a cofactor.

The enzyme catalyses homogentisate + O2 = 4-maleylacetoacetate + H(+). It participates in amino-acid degradation; L-phenylalanine degradation; acetoacetate and fumarate from L-phenylalanine: step 4/6. Functionally, involved in the catabolism of homogentisate (2,5-dihydroxyphenylacetate or 2,5-OH-PhAc), a central intermediate in the degradation of phenylalanine and tyrosine. Catalyzes the oxidative ring cleavage of the aromatic ring of homogentisate to yield maleylacetoacetate. This chain is Homogentisate 1,2-dioxygenase, found in Pseudomonas syringae pv. syringae (strain B728a).